Consider the following 628-residue polypeptide: Pre-rRNA-processing protein ESF1 (628 aa).

2 disordered regions span residues 78–147 and 192–229; these read KEAE…DISK and RMQR…DMDI. A Phosphoserine modification is found at serine 86. Residues 104–118 are compositionally biased toward low complexity; that stretch reads DYVSSSDEFTSSDSE. The span at 119–135 shows a compositional bias: acidic residues; it reads SSGESEVESEEENEVEI. The segment covering 192–207 has biased composition (basic and acidic residues); that stretch reads RMQREEVEGPPKELFQ. Positions 208–218 are enriched in basic residues; the sequence is KKNKNKTSKKK. Threonine 220 carries the phosphothreonine modification. A phosphoserine mark is found at serine 223, serine 225, serine 367, serine 369, and serine 372. The interval 412–541 is disordered; the sequence is TFTPALEGGN…KKERIVEDTF (130 aa). A compositionally biased stretch (basic and acidic residues) spans 420 to 439; that stretch reads GNEKSSEDKEETTIEKIRRK. The stretch at 426–495 forms a coiled coil; sequence EDKEETTIEK…SKAELELLMD (70 aa). Residues 440–450 are compositionally biased toward basic residues; that stretch reads EKERRKARKQK. Basic and acidic residues predominate over residues 451–462; the sequence is VKELKQQSEKDK. A compositionally biased stretch (basic residues) spans 463–472; it reads KSKLKSVNKK. Positions 481–490 are enriched in basic and acidic residues; it reads EKNAKSKAEL. Positions 492-501 are enriched in acidic residues; sequence LLMDDDDDTE. Threonine 542 carries the post-translational modification Phosphothreonine. Basic residues-rich tracts occupy residues 582–592 and 615–628; these read SKRVKNKKRKL and KLKK…KVKV. A disordered region spans residues 582-628; sequence SKRVKNKKRKLGGSENNMTNNADDNEDIGNLVNKLKKKSKSSKKVKV.

Belongs to the ESF1 family. In terms of assembly, interacts with KRR1, NOP1, NSR1, PUF6 and UTP22, proteins involved in 18S rRNA synthesis. Also interacts with ribosomal proteins RPS1, RPS3, RPS4, RPS6, RPS11, RPL2, RPL3, RPL4, RPL7, RPL10, RPL20 and RPP0 as well as with the snoRNAs U3 and U14.

Its subcellular location is the nucleus. The protein localises to the nucleolus. Its function is as follows. Involved in the 18S rRNA synthesis. Required for the early cleavages at sites A0, A1 and A2. In Saccharomyces cerevisiae (strain ATCC 204508 / S288c) (Baker's yeast), this protein is Pre-rRNA-processing protein ESF1 (ESF1).